The primary structure comprises 260 residues: Phosphate import ATP-binding protein PstB (260 aa).

Positions 14-255 (LQIRNLDFFY…PGKKQTEDYI (242 aa)) constitute an ABC transporter domain. 46–53 (GPSGCGKS) lines the ATP pocket.

This sequence belongs to the ABC transporter superfamily. Phosphate importer (TC 3.A.1.7) family. As to quaternary structure, the complex is composed of two ATP-binding proteins (PstB), two transmembrane proteins (PstC and PstA) and a solute-binding protein (PstS).

Its subcellular location is the cell inner membrane. The enzyme catalyses phosphate(out) + ATP + H2O = ADP + 2 phosphate(in) + H(+). Functionally, part of the ABC transporter complex PstSACB involved in phosphate import. Responsible for energy coupling to the transport system. The protein is Phosphate import ATP-binding protein PstB of Thiobacillus denitrificans (strain ATCC 25259 / T1).